The primary structure comprises 1038 residues: MGFIFSTEKVVYVLLLIFVCLENFGSNAQLLPEDEVQTLRTIFRKLQNQTVNIERTSCSDQNWNFVVESASNSPTSNITCDCTFNASSVCRVTNIQLKSFSLPGIFPPEFGNLTRLREIDLSRNFLNGTIPTTLSQIPLEILSVIGNRLSGPFPPQLGDITTLTDVNLETNLFTGPLPRNLGNLRSLKELLLSANNFTGQIPESLSNLKNLTEFRIDGNSLSGKIPDFIGNWTLLERLDLQGTSMEGPIPPSISNLTNLTELRITDLRGQAAFSFPDLRNLMKMKRLVLRNCLIRGPIPEYIGSMSELKTLDLSSNMLTGVIPDTFRNLDAFNFMFLNNNSLTGPVPQFIINSKENLDLSDNNFTQPPTLSCNQLDVNLISSYPSVTDNSVQWCLREGLPCPEDAKQSSLFINCGGSRLKIGKDTYTDDLNSRGQSTFSSVSERWGYSSSGVWLGKEDAGYLATDRFNLINGSTPEYYKTARLSPQSLKYYGLCLRRGSYKLQLHFAEIMFSNDQTFNSLGRRIFDIYVQGNLLERDFNIAERAGGVGKPFIRQIDGVQVNGSTLEIHLQWTGKGTNVIPTRGVYGPLISAITITPNFKVDTGKPLSNGAVAGIVIAACAVFGLLVLVILRLTGYLGGKEVDENEELRGLDLQTGSFTLKQIKRATNNFDPENKIGEGGFGPVYKGVLADGMTIAVKQLSSKSKQGNREFVTEIGMISALQHPNLVKLYGCCIEGKELLLVYEYLENNSLARALFGTEKQRLHLDWSTRNKICIGIAKGLAYLHEESRLKIVHRDIKATNVLLDLSLNAKISDFGLAKLNDDENTHISTRIAGTIGYMAPEYAMRGYLTDKADVYSFGVVCLEIVSGKSNTNYRPKEEFVYLLDWAYVLQEQGSLLELVDPDLGTSFSKKEAMRMLNIALLCTNPSPTLRPPMSSVVSMLEGKIKVQPPLVKREADPSGSAAMRFKALELLSQDSESQVSTYARNREQDISSSSMDGPWVDSSFSEPGKDVSLQQQEEGRSSSSSRKLLDDLTDVKIE.

A signal peptide spans 1-28 (MGFIFSTEKVVYVLLLIFVCLENFGSNA). Residues 29–609 (QLLPEDEVQT…VDTGKPLSNG (581 aa)) lie on the Extracellular side of the membrane. Asn48, Asn77, Asn85, Asn112, and Asn127 each carry an N-linked (GlcNAc...) asparagine glycan. LRR repeat units follow at residues 113 to 137 (LTRL…LSQI), 139 to 160 (LEIL…LGDI), 161 to 184 (TTLT…LGNL), 185 to 208 (RSLK…LSNL), 210 to 234 (NLTE…NWTL), and 236 to 256 (ERLD…ISNL). N-linked (GlcNAc...) asparagine glycosylation is found at Asn196, Asn210, Asn231, Asn255, and Asn258. LRR repeat units follow at residues 259 to 281 (LTEL…LRNL), 282 to 305 (MKMK…IGSM), 306 to 328 (SELK…TFRN), 330 to 351 (DAFN…QFII), and 352 to 374 (NSKE…SCNQ). Asn339, Asn363, Asn471, and Asn561 each carry an N-linked (GlcNAc...) asparagine glycan. The helical transmembrane segment at 610–630 (AVAGIVIAACAVFGLLVLVIL) threads the bilayer. The Cytoplasmic portion of the chain corresponds to 631-1038 (RLTGYLGGKE…LDDLTDVKIE (408 aa)). Thr658 carries the phosphothreonine modification. In terms of domain architecture, Protein kinase spans 669-950 (FDPENKIGEG…EGKIKVQPPL (282 aa)). Residues 675–683 (IGEGGFGPV) and Lys697 contribute to the ATP site. A Phosphotyrosine modification is found at Tyr742. The Proton acceptor role is filled by Asp795. Ser828 carries the post-translational modification Phosphoserine. Residues Thr829 and Thr834 each carry the phosphothreonine modification. Position 842 is a phosphotyrosine (Tyr842). The tract at residues 984-1038 (RNREQDISSSSMDGPWVDSSFSEPGKDVSLQQQEEGRSSSSSRKLLDDLTDVKIE) is disordered. The segment covering 1027 to 1038 (KLLDDLTDVKIE) has biased composition (basic and acidic residues).

It belongs to the protein kinase superfamily. Ser/Thr protein kinase family.

It is found in the membrane. It carries out the reaction L-seryl-[protein] + ATP = O-phospho-L-seryl-[protein] + ADP + H(+). It catalyses the reaction L-threonyl-[protein] + ATP = O-phospho-L-threonyl-[protein] + ADP + H(+). The chain is Probable LRR receptor-like serine/threonine-protein kinase At1g53430 from Arabidopsis thaliana (Mouse-ear cress).